A 326-amino-acid polypeptide reads, in one-letter code: Isopenicillin N synthase (326 aa).

The isopenicillin N site is built by R84, Y88, and Y186. N-[(5S)-5-amino-5-carboxypentanoyl]-L-cysteinyl-D-valine-binding residues include R84, Y88, Y186, H209, and D211. In terms of domain architecture, Fe2OG dioxygenase spans 183-283; it reads LIRYPFLENY…RLSIPFFANL (101 aa). The Fe(2+) site is built by H209, D211, and H265. 2-oxoglutarate is bound at residue R274. An isopenicillin N-binding site is contributed by S276. S276 contacts N-[(5S)-5-amino-5-carboxypentanoyl]-L-cysteinyl-D-valine.

It belongs to the iron/ascorbate-dependent oxidoreductase family. It depends on Fe cation as a cofactor. L-ascorbate is required as a cofactor.

It carries out the reaction N-[(5S)-5-amino-5-carboxypentanoyl]-L-cysteinyl-D-valine + O2 = isopenicillin N + 2 H2O. It functions in the pathway antibiotic biosynthesis; penicillin G biosynthesis; penicillin G from L-alpha-aminoadipate and L-cysteine and L-valine: step 2/3. Removes, in the presence of oxygen, 4 hydrogen atoms from delta-L-(alpha-aminoadipyl)-L-cysteinyl-D-valine (ACV) to form the azetidinone and thiazolidine rings of isopenicillin. This chain is Isopenicillin N synthase (pcbC), found in Flavobacterium sp. (strain SC 12,154).